A 591-amino-acid polypeptide reads, in one-letter code: Inactive metallocarboxypeptidase ECM14 (591 aa).

An N-terminal signal peptide occupies residues 1-21 (MRLFARLEVLAILACAVPIAA). Residues 22–175 (IPSFLSNSYP…QTIYESYPSS (154 aa)) constitute a propeptide that is removed on maturation. Residues 203–523 (DYQPFSVIVT…NAVMVLGRFL (321 aa)) form the Peptidase M14 domain. Histidine 265 and glutamate 268 together coordinate Zn(2+). Residues 265-268 (HARE), arginine 323, and 340-341 (DR) each bind substrate. Cysteine 334 and cysteine 357 form a disulfide bridge. Asparagine 350 and asparagine 381 each carry an N-linked (GlcNAc...) asparagine glycan. Residue histidine 397 participates in Zn(2+) binding. 398 to 399 (SY) provides a ligand contact to substrate. The segment covering 533–543 (DWEDESQRPKA) has biased composition (basic and acidic residues). The segment at 533 to 591 (DWEDESQRPKADEDDIPSENELGENDDSWIPFDYRNHDDQNEGEGYDNDEWGFRRRRKG) is disordered. 2 stretches are compositionally biased toward acidic residues: residues 544 to 559 (DEDD…ENDD) and 573 to 582 (NEGEGYDNDE).

The protein belongs to the peptidase M14 family. Zn(2+) is required as a cofactor.

It localises to the vacuole. Its subcellular location is the secreted. Inactive carboxypeptidase that may play a role in cell wall organization and biogenesis. The sequence is that of Inactive metallocarboxypeptidase ECM14 (ECM14) from Paracoccidioides lutzii (strain ATCC MYA-826 / Pb01) (Paracoccidioides brasiliensis).